A 334-amino-acid chain; its full sequence is Glucosyltransferase 3 (334 aa).

UDP is bound by residues Thr-16, Arg-179, and 249-254 (SHKSAT).

The protein belongs to the Gtf3 glucosyltransferase family. In terms of assembly, homotetramer; a dimer of dimers.

It participates in protein modification; protein glycosylation. In terms of biological role, required for polymorphic O-glycosylation of the serine-rich repeat protein in this bacteria. Catalyzes the second step in glycosylation by transferring glucose from UDP-glucose to the terminal GlcNAc moiety of the 3-O-(N-acetyl-alpha-D-glucosaminyl)-L-seryl-[protein] resulting from the first glycosylation step. Its function is as follows. Part of the accessory SecA2/SecY2 system specifically required to export GspB, a serine-rich repeat cell wall protein encoded upstream in the same operon. The protein is Glucosyltransferase 3 of Streptococcus gordonii.